The sequence spans 138 residues: Acidic phospholipase A2 2 (138 aa).

Residues 1 to 16 form the signal peptide; sequence MRTLWIVAVWLTGVEG. Cystine bridges form between Cys-42/Cys-131, Cys-44/Cys-60, Cys-59/Cys-111, Cys-65/Cys-138, Cys-66/Cys-104, Cys-73/Cys-97, and Cys-91/Cys-102. Positions 43, 45, and 47 each coordinate Ca(2+). The active site involves His-63. Residue Asp-64 participates in Ca(2+) binding. Asp-105 is an active-site residue.

Monomer. The cofactor is Ca(2+). Expressed by the venom gland.

The protein localises to the secreted. It carries out the reaction a 1,2-diacyl-sn-glycero-3-phosphocholine + H2O = a 1-acyl-sn-glycero-3-phosphocholine + a fatty acid + H(+). Functionally, snake venom phospholipase that inhibits ADP- and collagen-induced human platelet aggregation. This inhibition is completely inhibited by abolition of catalytic activity in case of collagen as inducer and partially inhibited in case of ADP as inducer. PLA2 catalyzes the calcium-dependent hydrolysis of the 2-acyl groups in 3-sn-phosphoglycerides. The protein is Acidic phospholipase A2 2 of Macrovipera lebetinus (Levantine viper).